A 280-amino-acid chain; its full sequence is GTP-binding protein rhoC (280 aa).

The tract at residues 13-59 (TSRRHSLVTPPPSVAPRQNRMRSQSVRVSNGTVSTDNSMSSGRVSEA) is disordered. Positions 33 to 59 (MRSQSVRVSNGTVSTDNSMSSGRVSEA) are enriched in polar residues. 76 to 83 (GDGGCGKT) serves as a coordination point for GTP. An Effector region motif is present at residues 98–106 (YVPTVFENY). GTP contacts are provided by residues 125 to 129 (DTAGQ) and 183 to 186 (LKSD). The segment at 251–275 (WDTRLPSSSGKPGGKPIGGKKIKKR) is disordered. The residue at position 277 (Cys-277) is a Cysteine methyl ester. Cys-277 is lipidated: S-geranylgeranyl cysteine. A propeptide spans 278 to 280 (KIL) (removed in mature form).

It belongs to the small GTPase superfamily. Rho family.

Its subcellular location is the cell membrane. In Emericella nidulans (strain FGSC A4 / ATCC 38163 / CBS 112.46 / NRRL 194 / M139) (Aspergillus nidulans), this protein is GTP-binding protein rhoC (rhoC).